The following is a 281-amino-acid chain: Bifunctional protein FolD (281 aa).

Residues 165-167 and Ser-190 each bind NADP(+); that span reads GRS.

It belongs to the tetrahydrofolate dehydrogenase/cyclohydrolase family. In terms of assembly, homodimer.

It carries out the reaction (6R)-5,10-methylene-5,6,7,8-tetrahydrofolate + NADP(+) = (6R)-5,10-methenyltetrahydrofolate + NADPH. The catalysed reaction is (6R)-5,10-methenyltetrahydrofolate + H2O = (6R)-10-formyltetrahydrofolate + H(+). The protein operates within one-carbon metabolism; tetrahydrofolate interconversion. Its function is as follows. Catalyzes the oxidation of 5,10-methylenetetrahydrofolate to 5,10-methenyltetrahydrofolate and then the hydrolysis of 5,10-methenyltetrahydrofolate to 10-formyltetrahydrofolate. The sequence is that of Bifunctional protein FolD from Polaromonas sp. (strain JS666 / ATCC BAA-500).